The sequence spans 338 residues: Inositol 2-dehydrogenase 4 (338 aa).

The protein belongs to the Gfo/Idh/MocA family. In terms of assembly, homotetramer.

It carries out the reaction myo-inositol + NAD(+) = scyllo-inosose + NADH + H(+). Its function is as follows. Involved in the oxidation of myo-inositol (MI) to 2-keto-myo-inositol (2KMI or 2-inosose). The polypeptide is Inositol 2-dehydrogenase 4 (Saccharopolyspora erythraea (strain ATCC 11635 / DSM 40517 / JCM 4748 / NBRC 13426 / NCIMB 8594 / NRRL 2338)).